The chain runs to 325 residues: Ferrochelatase (325 aa).

H195 and E276 together coordinate Fe cation.

Belongs to the ferrochelatase family.

The protein localises to the cytoplasm. The enzyme catalyses heme b + 2 H(+) = protoporphyrin IX + Fe(2+). The protein operates within porphyrin-containing compound metabolism; protoheme biosynthesis; protoheme from protoporphyrin-IX: step 1/1. Catalyzes the ferrous insertion into protoporphyrin IX. In Methylococcus capsulatus (strain ATCC 33009 / NCIMB 11132 / Bath), this protein is Ferrochelatase.